The primary structure comprises 434 residues: Methyl-coenzyme M reductase subunit beta (434 aa).

Y365 provides a ligand contact to coenzyme M. G367 provides a ligand contact to coenzyme B.

This sequence belongs to the methyl-coenzyme M reductase beta subunit family. As to quaternary structure, MCR is a hexamer of two alpha, two beta, and two gamma chains, forming a dimer of heterotrimers. The cofactor is coenzyme F430.

Its subcellular location is the cytoplasm. It carries out the reaction coenzyme B + methyl-coenzyme M = methane + coenzyme M-coenzyme B heterodisulfide. The protein operates within one-carbon metabolism; methyl-coenzyme M reduction; methane from methyl-coenzyme M: step 1/1. Component of the methyl-coenzyme M reductase (MCR) I that catalyzes the reductive cleavage of methyl-coenzyme M (CoM-S-CH3 or 2-(methylthio)ethanesulfonate) using coenzyme B (CoB or 7-mercaptoheptanoylthreonine phosphate) as reductant which results in the production of methane and the mixed heterodisulfide of CoB and CoM (CoM-S-S-CoB). This is the final step in methanogenesis. This Methanosarcina barkeri (strain Fusaro / DSM 804) protein is Methyl-coenzyme M reductase subunit beta (mcrB).